Here is a 136-residue protein sequence, read N- to C-terminus: Transcription antitermination protein NusB (136 aa).

The protein belongs to the NusB family.

Involved in transcription antitermination. Required for transcription of ribosomal RNA (rRNA) genes. Binds specifically to the boxA antiterminator sequence of the ribosomal RNA (rrn) operons. The sequence is that of Transcription antitermination protein NusB from Salinispora tropica (strain ATCC BAA-916 / DSM 44818 / JCM 13857 / NBRC 105044 / CNB-440).